The following is a 242-amino-acid chain: Adenosylcobinamide-GDP ribazoletransferase (242 aa).

5 consecutive transmembrane segments (helical) span residues Leu-31–Ala-51, Leu-52–Ser-72, Ile-109–Ile-129, Gly-134–Thr-154, and Ile-188–Gly-208.

It belongs to the CobS family. It depends on Mg(2+) as a cofactor.

The protein resides in the cell inner membrane. The enzyme catalyses alpha-ribazole + adenosylcob(III)inamide-GDP = adenosylcob(III)alamin + GMP + H(+). It carries out the reaction alpha-ribazole 5'-phosphate + adenosylcob(III)inamide-GDP = adenosylcob(III)alamin 5'-phosphate + GMP + H(+). Its pathway is cofactor biosynthesis; adenosylcobalamin biosynthesis; adenosylcobalamin from cob(II)yrinate a,c-diamide: step 7/7. In terms of biological role, joins adenosylcobinamide-GDP and alpha-ribazole to generate adenosylcobalamin (Ado-cobalamin). Also synthesizes adenosylcobalamin 5'-phosphate from adenosylcobinamide-GDP and alpha-ribazole 5'-phosphate. This is Adenosylcobinamide-GDP ribazoletransferase from Pseudomonas fluorescens (strain SBW25).